The sequence spans 383 residues: Aurachin C monooxygenase/isomerase (383 aa).

FAD contacts are provided by residues Gly-15, Ser-47, Val-128, Asp-285, and 295 to 299 (GQGGC).

It depends on FAD as a cofactor.

It catalyses the reaction aurachin C + NADH + O2 + H(+) = 4-hydroxy-2-methyl-3-oxo-4-[(2E,6E)-farnesyl]-3,4-dihydroquinoline 1-oxide + NAD(+) + H2O. The catalysed reaction is aurachin C + NADPH + O2 + H(+) = 4-hydroxy-2-methyl-3-oxo-4-[(2E,6E)-farnesyl]-3,4-dihydroquinoline 1-oxide + NADP(+) + H2O. The enzyme catalyses aurachin C + NADH + O2 + H(+) = aurachin C epoxide + NAD(+) + H2O. It carries out the reaction aurachin C + NADPH + O2 + H(+) = aurachin C epoxide + NADP(+) + H2O. It catalyses the reaction aurachin C epoxide = 2-hydroxy-1a-methyl-7a-[(2E,6E)-farnesyl]-1a,2-dihydrooxireno[2,3-b]quinolin-7(7aH)-one. The catalysed reaction is 2-hydroxy-1a-methyl-7a-[(2E,6E)-farnesyl]-1a,2-dihydrooxireno[2,3-b]quinolin-7(7aH)-one = 4-hydroxy-2-methyl-3-oxo-4-[(2E,6E)-farnesyl]-3,4-dihydroquinoline 1-oxide. Functionally, catalyzes the initial step in the conversion of aurachin C to aurachin B. Catalyzes the epoxidation of the C(2)-C(3) double bond of aurachin C, which is followed by a semipinacol rearrangement, causing migration of the farnesyl group from C(3) to C(4). Accepts both NADH and NADPH, but has a preference for NADH. This chain is Aurachin C monooxygenase/isomerase, found in Stigmatella aurantiaca.